The following is a 471-amino-acid chain: Abscisic acid 8'-hydroxylase 1 (471 aa).

The chain crosses the membrane as a helical span at residues 1 to 21; sequence MGAFLLFVCVLAPFLLVCAVR. Residue C415 participates in heme binding.

It belongs to the cytochrome P450 family. It depends on heme as a cofactor. In terms of tissue distribution, in seedlings and expanding leaves.

The protein localises to the membrane. It carries out the reaction 2-cis-(+)-abscisate + reduced [NADPH--hemoprotein reductase] + O2 = (+)-8'-hydroxyabscisate + oxidized [NADPH--hemoprotein reductase] + H2O + H(+). It participates in plant hormone degradation; abscisic acid degradation. In terms of biological role, involved in the oxidative degradation of abscisic acid. The chain is Abscisic acid 8'-hydroxylase 1 (CYP707A5) from Oryza sativa subsp. indica (Rice).